The following is a 246-amino-acid chain: Homeobox protein Hox-B4a (246 aa).

The tract at residues 23–125 (YSQSDYLPSH…SQNTSTVSSR (103 aa)) is disordered. 2 stretches are compositionally biased toward polar residues: residues 39 to 48 (AQRQDPSFQH) and 112 to 123 (QTPTSQNTSTVS). Positions 130–135 (VYPWMK) match the Antp-type hexapeptide motif. The homeobox DNA-binding region spans 151–210 (PKRSRTAYTRQQVLELEKEFHYNRYLTRRRRVEIAHTLCLSERQIKIWFQNRRMKWKKDH). Residues 210–246 (HKLPNTKIRSNSASTNSSGCPTLCSNQSRASGPPPSL) form a disordered region. Over residues 216-239 (KIRSNSASTNSSGCPTLCSNQSRA) the composition is skewed to polar residues.

Belongs to the Antp homeobox family. Deformed subfamily.

The protein resides in the nucleus. Its function is as follows. Sequence-specific transcription factor which is part of a developmental regulatory system that provides cells with specific positional identities on the anterior-posterior axis. This chain is Homeobox protein Hox-B4a (hoxb4a), found in Danio rerio (Zebrafish).